Consider the following 431-residue polypeptide: MYRFAPSPTGDMHIGNLRAAIFNYICSLQDKSGFILRIEDTDKERNIQGKEKDILEILSKFGIKPQQIYIQSENLKFHRQLASKLLIDKKAFACFCTEEELEAKKQKAKEEGVAYRYDGTCERLSDAEVLACDKPFVIRMKKPERTMSFTDAIKGELSFEPDAVDSFVIMRTDKTPTYNFACAVDDMLEGVTFVIRGEDHVSNTPKQDLIREGLGYTGKMNYAHLPILLNIEGKKMSKRENESSVKWLFEQGFLPEAIANYLILLGNKTPSEIFTIDEAVKWFDITKISRSPARFDVKKLEQINREHIKLASDDRIAEVFGMDKNLANLVRFYTQESSLVPEIKEKVNKIFAPKVAPEEYKSEFETIKNAAKNLGEFENFDDFKKALMTATGLKGKNFFMPLRALLTGDLHGPELSELYPLIKGDLARIIA.

Residues 6-16 (PSPTGDMHIGN) carry the 'HIGH' region motif. The 'KMSKS' region motif lies at 235 to 239 (KMSKR). Lys238 provides a ligand contact to ATP.

It belongs to the class-I aminoacyl-tRNA synthetase family. Glutamate--tRNA ligase type 1 subfamily. In terms of assembly, monomer.

It localises to the cytoplasm. The catalysed reaction is tRNA(Glu) + L-glutamate + ATP = L-glutamyl-tRNA(Glu) + AMP + diphosphate. Catalyzes the attachment of glutamate to tRNA(Glu) in a two-step reaction: glutamate is first activated by ATP to form Glu-AMP and then transferred to the acceptor end of tRNA(Glu). The sequence is that of Glutamate--tRNA ligase 1 from Campylobacter curvus (strain 525.92).